A 147-amino-acid chain; its full sequence is Large ribosomal subunit protein bL21 (147 aa).

Positions 125 to 147 (EEVEAAPKAKKAAPKAKKEATKE) are disordered.

Belongs to the bacterial ribosomal protein bL21 family. In terms of assembly, part of the 50S ribosomal subunit. Contacts protein L20.

In terms of biological role, this protein binds to 23S rRNA in the presence of protein L20. The chain is Large ribosomal subunit protein bL21 from Flavobacterium johnsoniae (strain ATCC 17061 / DSM 2064 / JCM 8514 / BCRC 14874 / CCUG 350202 / NBRC 14942 / NCIMB 11054 / UW101) (Cytophaga johnsonae).